The primary structure comprises 536 residues: ATP synthase subunit alpha, mitochondrial (536 aa).

A mitochondrion-targeting transit peptide spans 1–27 (MLRQAGTRLLKVPVCGLRPSITLKRGY). Residue 197–204 (GDRQTGKT) participates in ATP binding.

The protein belongs to the ATPase alpha/beta chains family. In terms of assembly, F-type ATPases have 2 components, CF(1) - the catalytic core - and CF(0) - the membrane proton channel. CF(1) has five subunits: alpha(3), beta(3), gamma(1), delta(1), epsilon(1). CF(0) has three main subunits: a, b and c.

The protein localises to the mitochondrion. Its subcellular location is the mitochondrion inner membrane. Functionally, mitochondrial membrane ATP synthase (F(1)F(0) ATP synthase or Complex V) produces ATP from ADP in the presence of a proton gradient across the membrane which is generated by electron transport complexes of the respiratory chain. F-type ATPases consist of two structural domains, F(1) - containing the extramembraneous catalytic core, and F(0) - containing the membrane proton channel, linked together by a central stalk and a peripheral stalk. During catalysis, ATP synthesis in the catalytic domain of F(1) is coupled via a rotary mechanism of the central stalk subunits to proton translocation. Subunits alpha and beta form the catalytic core in F(1). Rotation of the central stalk against the surrounding alpha(3)beta(3) subunits leads to hydrolysis of ATP in three separate catalytic sites on the beta subunits. Subunit alpha does not bear the catalytic high-affinity ATP-binding sites. In Schizosaccharomyces pombe (strain 972 / ATCC 24843) (Fission yeast), this protein is ATP synthase subunit alpha, mitochondrial (atp1).